Consider the following 155-residue polypeptide: Transcriptional repressor NrdR (155 aa).

Residues 3-34 (CPYCGHLEDRVVDSRETQDGQATRRRRACLSC) fold into a zinc finger. One can recognise an ATP-cone domain in the interval 49 to 139 (PQVVKKDGRR…VYRAFRDVGE (91 aa)).

This sequence belongs to the NrdR family. It depends on Zn(2+) as a cofactor.

Its function is as follows. Negatively regulates transcription of bacterial ribonucleotide reductase nrd genes and operons by binding to NrdR-boxes. The protein is Transcriptional repressor NrdR of Anaeromyxobacter sp. (strain K).